The following is a 47-amino-acid chain: Delta-actitoxin-Axm1e (47 aa).

Cystine bridges form between Cys-4–Cys-44, Cys-6–Cys-34, and Cys-27–Cys-45.

Belongs to the sea anemone sodium channel inhibitory toxin family. Type I subfamily.

Its subcellular location is the secreted. The protein localises to the nematocyst. Functionally, binds specifically to voltage-gated sodium channels (Nav), thereby delaying their inactivation. This toxin is active on a variety of voltage-gated sodium channels (Nav1.1/SCN1A, Nav1.2/SCN2A, Nav1.3/SCN3A, Nav1.4/SCN4A, Nav1.5/SCN5A and Nav1.6/SCN8A). In Anthopleura xanthogrammica (Giant green sea anemone), this protein is Delta-actitoxin-Axm1e.